The following is a 354-amino-acid chain: Muscleblind-like protein 3 (354 aa).

4 consecutive C3H1-type zinc fingers follow at residues 14 to 42 (WLTLEVCREFQRGTCSRADADCKFAHPPR), 48 to 74 (NGRVVACFDSLKGRCTRENCKYLHPPP), 174 to 202 (SDKLEVCREFQRGNCTRGENDCRYAHPTD), and 210 to 236 (DNTVTICMDYIKGRCSREKCKYFHPPA).

Belongs to the muscleblind family. As to expression, highly expressed in the placenta.

It localises to the nucleus. Its subcellular location is the cytoplasm. Its function is as follows. Mediates pre-mRNA alternative splicing regulation. Acts either as activator or repressor of splicing on specific pre-mRNA targets. Inhibits cardiac troponin-T (TNNT2) pre-mRNA exon inclusion but induces insulin receptor (IR) pre-mRNA exon inclusion in muscle. Antagonizes the alternative splicing activity pattern of CELF proteins. May play a role in myotonic dystrophy pathophysiology (DM). Could inhibit terminal muscle differentiation, acting at approximately the time of myogenin induction. This chain is Muscleblind-like protein 3 (MBNL3), found in Homo sapiens (Human).